Here is a 330-residue protein sequence, read N- to C-terminus: MEKSFILQQQGISFAKHTFTQKLMEHLGLIEVQGPLLSQVGDGIQDGLSGREKAVSVSVKQIPGTAFEVVHSLAKWKRHTLARYGFQDNEGLFVHMIALRPDEDFLDQVRSVCVDQWDWEKVVPVGSRNLAYLKDTVRKVYGALRESEVLVSERFGLRAFLPADIVFVQSEELVRRYPHLDSKGREDAICKEHGAVFLIGIGGVLSDGKPHDVRAPDYDDWTTPSEGEYKGLNGDILVWNPVLGRAFEVSSMGIRVDEGALRTQLALTGDEDSLACSWHQDLINGRLPQSIGGGIGQSRLAMLLLQRKHIGEVQASVWPRSVREEFENIL.

Belongs to the class-II aminoacyl-tRNA synthetase family. AsnA subfamily.

It is found in the cytoplasm. The enzyme catalyses L-aspartate + NH4(+) + ATP = L-asparagine + AMP + diphosphate + H(+). Its pathway is amino-acid biosynthesis; L-asparagine biosynthesis; L-asparagine from L-aspartate (ammonia route): step 1/1. The protein is Aspartate--ammonia ligase of Treponema pallidum (strain Nichols).